The primary structure comprises 503 residues: Protein DETOXIFICATION 36 (503 aa).

The next 12 membrane-spanning stretches (helical) occupy residues 54 to 74 (LFHL…MSML), 87 to 107 (LAAA…LMLG), 137 to 157 (IVLV…KPLL), 166 to 186 (VASV…AYAV), 203 to 223 (SAYI…LSVF), 225 to 245 (FGWG…IIVL), 271 to 293 (GLWD…SWYS), 313 to 333 (LAIC…FNAA), 355 to 375 (AVTT…ILSW), 399 to 419 (FLAI…VAVG), 427 to 447 (AYVN…VLGF), and 456 to 476 (IWTG…IVTF).

It belongs to the multi antimicrobial extrusion (MATE) (TC 2.A.66.1) family.

It localises to the membrane. The sequence is that of Protein DETOXIFICATION 36 from Arabidopsis thaliana (Mouse-ear cress).